A 206-amino-acid chain; its full sequence is Small ribosomal subunit protein uS4 (206 aa).

Positions 96–161 (RRLDNVVYRM…QGRIQAALAL (66 aa)) constitute an S4 RNA-binding domain.

Belongs to the universal ribosomal protein uS4 family. In terms of assembly, part of the 30S ribosomal subunit. Contacts protein S5. The interaction surface between S4 and S5 is involved in control of translational fidelity.

Its function is as follows. One of the primary rRNA binding proteins, it binds directly to 16S rRNA where it nucleates assembly of the body of the 30S subunit. Functionally, with S5 and S12 plays an important role in translational accuracy. In Legionella pneumophila (strain Corby), this protein is Small ribosomal subunit protein uS4.